The following is a 506-amino-acid chain: Probable UTP--glucose-1-phosphate uridylyltransferase (506 aa).

Phosphoserine is present on residues Ser15 and Ser17. UTP-binding positions include 115–118 (LNGG), Lys129, Gln192, and Gly221. Residue 117 to 118 (GG) coordinates substrate. Lys129 provides a ligand contact to Mg(2+). Residues His222 and 250 to 252 (NID) contribute to the substrate site. Asp252 and Lys394 together coordinate UTP. Asp252 contacts Mg(2+). Lys394 is a catalytic residue. Residues 455–506 (HLTITGDVNIGRNVTLKGTVIIVASDANRIDIPNGSVLENCVITGNLNILEH) are oligomerization.

This sequence belongs to the UDPGP type 1 family. As to quaternary structure, homooctamer.

It localises to the cytoplasm. It is found in the nucleus. The catalysed reaction is alpha-D-glucose 1-phosphate + UTP + H(+) = UDP-alpha-D-glucose + diphosphate. Plays a central role as a glucosyl donor in cellular metabolic pathways. This Schizosaccharomyces pombe (strain 972 / ATCC 24843) (Fission yeast) protein is Probable UTP--glucose-1-phosphate uridylyltransferase (fyu1).